A 264-amino-acid chain; its full sequence is MSNSNIHPTSLIAEKAKLGKNVKIGPYCIIGPEVVLHDNVELKSHVVIEGITEIGENTVIYPFASIGQPPQILKYANERSNTIIGSNNTIREYVTVQAGSQGGGMVTRVGNNNLFMVGVHIGHDCKIGNNVVFANYVSLAGHIEVGDYAIIGGLSAVHQYARIGEYSMIGGLSPVGADVIPFGLVSSKRAVLEGLNLIGMNRKGFDKADSLSALKAIEEIFSGEGNFAERIKQVAEKYKNNSIVMQIIDFLNQDSSRAFCRFEK.

Belongs to the transferase hexapeptide repeat family. LpxA subfamily. Homotrimer.

It is found in the cytoplasm. The enzyme catalyses a (3R)-hydroxyacyl-[ACP] + UDP-N-acetyl-alpha-D-glucosamine = a UDP-3-O-[(3R)-3-hydroxyacyl]-N-acetyl-alpha-D-glucosamine + holo-[ACP]. It functions in the pathway glycolipid biosynthesis; lipid IV(A) biosynthesis; lipid IV(A) from (3R)-3-hydroxytetradecanoyl-[acyl-carrier-protein] and UDP-N-acetyl-alpha-D-glucosamine: step 1/6. Involved in the biosynthesis of lipid A, a phosphorylated glycolipid that anchors the lipopolysaccharide to the outer membrane of the cell. The chain is Acyl-[acyl-carrier-protein]--UDP-N-acetylglucosamine O-acyltransferase from Rickettsia felis (strain ATCC VR-1525 / URRWXCal2) (Rickettsia azadi).